Here is a 203-residue protein sequence, read N- to C-terminus: uncharacterized protein (203 aa).

The next 4 membrane-spanning stretches (helical) occupy residues tyrosine 9–alanine 29, phenylalanine 42–valine 62, serine 86–valine 106, and tyrosine 126–leucine 146. Basic and acidic residues-rich tracts occupy residues glycine 164 to serine 174 and aspartate 182 to aspartate 191. Residues glycine 164–leucine 203 form a disordered region. The segment covering proline 194–leucine 203 has biased composition (polar residues).

It localises to the cell membrane. This is an uncharacterized protein from Mycoplasma pneumoniae (strain ATCC 29342 / M129 / Subtype 1) (Mycoplasmoides pneumoniae).